The following is a 428-amino-acid chain: MSSSRSVYSSSSVVGGSPYRSLSSAPRFTPGSSAASVHAGAGGSGARISVSRVSTVGSGFGGGFSGASNVNLFGGVQNEKETMQDLNDRLASYLERVRSLESANKKLEVQIRQHTEKKGPAKDWSPYYMTIEDLKKQVFNSIVENSQLVLQIDNARLAADDFRVKYESEVAIRMSVETDIGGLRKLIDDTNISRLNLENEFESLKEELIFLKKNHQDDVNELQAQIASSAVTVEVDAPKSQDLGKIMADLRAQYDEMAQKNREDVEKLYQSKVEEHTVQVNLDAEALHTAKSSVTELRRTMQSLEIELESLRNQKASLEGTLHDTEARYAMELEMLGGTAMALETELVQVRNDCQRQQQEYQALLNTKMKLEAEIQTYRRLLEGDSFDLQDAVPVVTTQTVKKVITTTQRLVDGKVVAESNNTEVIKS.

Positions 2–78 are head; the sequence is SSSRSVYSSS…NVNLFGGVQN (77 aa). The segment at 24–45 is disordered; the sequence is SAPRFTPGSSAASVHAGAGGSG. A coil 1A region spans residues 79 to 114; that stretch reads EKETMQDLNDRLASYLERVRSLESANKKLEVQIRQH. The IF rod domain maps to 79–389; the sequence is EKETMQDLND…RLLEGDSFDL (311 aa). Positions 115–130 are linker 1; sequence TEKKGPAKDWSPYYMT. The coil 1B stretch occupies residues 131–222; that stretch reads IEDLKKQVFN…KNHQDDVNEL (92 aa). A linker 12 region spans residues 223–246; that stretch reads QAQIASSAVTVEVDAPKSQDLGKI. Residues 247-384 form a coil 2 region; it reads MADLRAQYDE…IQTYRRLLEG (138 aa). The interval 385–428 is tail; that stretch reads DSFDLQDAVPVVTTQTVKKVITTTQRLVDGKVVAESNNTEVIKS.

It belongs to the intermediate filament family. In terms of assembly, heterotetramer of two type I and two type II keratins. Keratin-18 associates with keratin-8. In terms of processing, proteolytically cleaved by caspases during epithelial cell apoptosis. Expressed at high levels in notochord and low levels in adult liver.

Its function is as follows. When phosphorylated, plays a role in filament reorganization. This chain is Keratin, type I cytoskeletal 18-A (krt18-a), found in Xenopus laevis (African clawed frog).